A 200-amino-acid chain; its full sequence is Holliday junction resolvase RecU (200 aa).

Positions 1 to 25 (MTIRYPNGKRYNQASQPHKTPIKKH) are disordered. Mg(2+)-binding residues include Thr-85, Asp-87, Glu-100, and Gln-119.

It belongs to the RecU family. The cofactor is Mg(2+).

The protein localises to the cytoplasm. It catalyses the reaction Endonucleolytic cleavage at a junction such as a reciprocal single-stranded crossover between two homologous DNA duplexes (Holliday junction).. In terms of biological role, endonuclease that resolves Holliday junction intermediates in genetic recombination. Cleaves mobile four-strand junctions by introducing symmetrical nicks in paired strands. Promotes annealing of linear ssDNA with homologous dsDNA. Required for DNA repair, homologous recombination and chromosome segregation. This chain is Holliday junction resolvase RecU, found in Bacillus thuringiensis (strain Al Hakam).